Consider the following 876-residue polypeptide: Leucine--tRNA ligase (876 aa).

The 'HIGH' region signature appears at 43 to 53 (PYPSGRIHMGH). The 'KMSKS' region motif lies at 632-636 (KMSKS). Position 635 (lysine 635) interacts with ATP.

The protein belongs to the class-I aminoacyl-tRNA synthetase family.

It localises to the cytoplasm. It catalyses the reaction tRNA(Leu) + L-leucine + ATP = L-leucyl-tRNA(Leu) + AMP + diphosphate. The polypeptide is Leucine--tRNA ligase (Sinorhizobium fredii (strain NBRC 101917 / NGR234)).